Reading from the N-terminus, the 318-residue chain is DNA polymerase IV (318 aa).

The UmuC domain occupies 6-186 (IIHIDMDAFY…LPLGKIPGVG (181 aa)). The Mg(2+) site is built by aspartate 10 and aspartate 104. Residue glutamate 105 is part of the active site.

It belongs to the DNA polymerase type-Y family. As to quaternary structure, monomer. It depends on Mg(2+) as a cofactor.

The protein resides in the cytoplasm. The enzyme catalyses DNA(n) + a 2'-deoxyribonucleoside 5'-triphosphate = DNA(n+1) + diphosphate. In terms of biological role, poorly processive, error-prone DNA polymerase involved in untargeted mutagenesis. Copies undamaged DNA at stalled replication forks, which arise in vivo from mismatched or misaligned primer ends. These misaligned primers can be extended by PolIV. Exhibits no 3'-5' exonuclease (proofreading) activity. May be involved in translesional synthesis, in conjunction with the beta clamp from PolIII. In Neisseria meningitidis serogroup B (strain ATCC BAA-335 / MC58), this protein is DNA polymerase IV.